A 345-amino-acid polypeptide reads, in one-letter code: Probable deoxyhypusine synthase 2 (345 aa).

Residue lysine 292 is the Nucleophile of the active site.

It belongs to the deoxyhypusine synthase family. Requires NAD(+) as cofactor.

It catalyses the reaction [eIF5A protein]-L-lysine + spermidine = [eIF5A protein]-deoxyhypusine + propane-1,3-diamine. The protein operates within protein modification; eIF5A hypusination. Functionally, catalyzes the NAD-dependent oxidative cleavage of spermidine and the subsequent transfer of the butylamine moiety of spermidine to the epsilon-amino group of a specific lysine residue of the eIF-5A precursor protein to form the intermediate deoxyhypusine residue. This Methanosarcina mazei (strain ATCC BAA-159 / DSM 3647 / Goe1 / Go1 / JCM 11833 / OCM 88) (Methanosarcina frisia) protein is Probable deoxyhypusine synthase 2 (dys2).